The chain runs to 505 residues: Deoxyguanosinetriphosphate triphosphohydrolase (505 aa).

The HD domain occupies 66–273; that stretch reads RLTHSMEVQQ…MEAADDISYC (208 aa).

This sequence belongs to the dGTPase family. Type 1 subfamily. As to quaternary structure, homotetramer. It depends on Mg(2+) as a cofactor.

The enzyme catalyses dGTP + H2O = 2'-deoxyguanosine + triphosphate + H(+). Its activity is regulated as follows. Inhibited by the action of reducing agents such as dithiothreitol and 2-mercaptoethanol. Its function is as follows. dGTPase preferentially hydrolyzes dGTP over the other canonical NTPs. This chain is Deoxyguanosinetriphosphate triphosphohydrolase, found in Shigella boydii.